Here is a 322-residue protein sequence, read N- to C-terminus: uncharacterized protein (322 aa).

Residues 299–319 (GLLLEGTIVALILLEIILALA) traverse the membrane as a helical segment.

It localises to the membrane. This is an uncharacterized protein from Methanocaldococcus jannaschii (strain ATCC 43067 / DSM 2661 / JAL-1 / JCM 10045 / NBRC 100440) (Methanococcus jannaschii).